The chain runs to 240 residues: 2,3,4,5-tetrahydropyridine-2,6-dicarboxylate N-acetyltransferase (240 aa).

Belongs to the transferase hexapeptide repeat family. DapH subfamily.

It carries out the reaction (S)-2,3,4,5-tetrahydrodipicolinate + acetyl-CoA + H2O = L-2-acetamido-6-oxoheptanedioate + CoA. Its pathway is amino-acid biosynthesis; L-lysine biosynthesis via DAP pathway; LL-2,6-diaminopimelate from (S)-tetrahydrodipicolinate (acetylase route): step 1/3. Catalyzes the transfer of an acetyl group from acetyl-CoA to tetrahydrodipicolinate. In Staphylococcus epidermidis (strain ATCC 35984 / DSM 28319 / BCRC 17069 / CCUG 31568 / BM 3577 / RP62A), this protein is 2,3,4,5-tetrahydropyridine-2,6-dicarboxylate N-acetyltransferase.